Reading from the N-terminus, the 248-residue chain is MKIDVLTLFPEMFQSPFEESIFKRATDNNLVRLEIYNFRDFAHDKHHAVDDSPYGGGAGMLLKPEPLFEAVEDVLREDPTPAPIILLSPQGRSFNQEVARELAKHERLIIICGHYEGFDERVREHLATDEISIGDFVLTGGELAAMVVIDAVSRLIPGVLGSGESSQDDSHSNGLLEHPHYTRPPVFRGWGIPDVLLSGNHAQINRWRRKESLRRTLKRRPDMFEKIPLSKTDRKLVDEILAEENAQG.

Residues Gly113 and Ile133 to Leu138 each bind S-adenosyl-L-methionine.

It belongs to the RNA methyltransferase TrmD family. In terms of assembly, homodimer.

Its subcellular location is the cytoplasm. The catalysed reaction is guanosine(37) in tRNA + S-adenosyl-L-methionine = N(1)-methylguanosine(37) in tRNA + S-adenosyl-L-homocysteine + H(+). Specifically methylates guanosine-37 in various tRNAs. This chain is tRNA (guanine-N(1)-)-methyltransferase, found in Dehalococcoides mccartyi (strain CBDB1).